The sequence spans 55 residues: ATP synthase F(0) complex subunit 8 (55 aa).

The chain crosses the membrane as a helical span at residues 8–24 (PWFSIMVMTWLTLALLI). Positions 35-55 (NPPSKKPSLITKPTPWAWPWT) are disordered.

The protein belongs to the ATPase protein 8 family. As to quaternary structure, component of the ATP synthase complex composed at least of ATP5F1A/subunit alpha, ATP5F1B/subunit beta, ATP5MC1/subunit c (homooctomer), MT-ATP6/subunit a, MT-ATP8/subunit 8, ATP5ME/subunit e, ATP5MF/subunit f, ATP5MG/subunit g, ATP5MK/subunit k, ATP5MJ/subunit j, ATP5F1C/subunit gamma, ATP5F1D/subunit delta, ATP5F1E/subunit epsilon, ATP5PF/subunit F6, ATP5PB/subunit b, ATP5PD/subunit d, ATP5PO/subunit OSCP. ATP synthase complex consists of a soluble F(1) head domain (subunits alpha(3) and beta(3)) - the catalytic core - and a membrane F(0) domain - the membrane proton channel (subunits c, a, 8, e, f, g, k and j). These two domains are linked by a central stalk (subunits gamma, delta, and epsilon) rotating inside the F1 region and a stationary peripheral stalk (subunits F6, b, d, and OSCP).

The protein resides in the mitochondrion membrane. Its function is as follows. Subunit 8, of the mitochondrial membrane ATP synthase complex (F(1)F(0) ATP synthase or Complex V) that produces ATP from ADP in the presence of a proton gradient across the membrane which is generated by electron transport complexes of the respiratory chain. ATP synthase complex consist of a soluble F(1) head domain - the catalytic core - and a membrane F(1) domain - the membrane proton channel. These two domains are linked by a central stalk rotating inside the F(1) region and a stationary peripheral stalk. During catalysis, ATP synthesis in the catalytic domain of F(1) is coupled via a rotary mechanism of the central stalk subunits to proton translocation. In vivo, can only synthesize ATP although its ATP hydrolase activity can be activated artificially in vitro. Part of the complex F(0) domain. The sequence is that of ATP synthase F(0) complex subunit 8 from Anas platyrhynchos (Mallard).